Here is an 814-residue protein sequence, read N- to C-terminus: Exostosin-like-3 homolog (814 aa).

The Cytoplasmic portion of the chain corresponds to 1–14; the sequence is MAIKLNGSSRSFVP. A helical; Signal-anchor for type II membrane protein transmembrane segment spans residues 15–35; the sequence is SLRVSAFLIFIFFVITYIIIY. N-linked (GlcNAc...) asparagine glycosylation is found at N36, N227, N297, N322, N454, and N492. The Lumenal portion of the chain corresponds to 36-814; that stretch reads NVSFSEPSWI…QNHQKCFKYV (779 aa). 7 residues coordinate UDP-N-acetyl-alpha-D-glucosamine: R570, N595, N620, R625, D641, D642, and D643. D643 contributes to the Mn(2+) binding site. Residue N685 is glycosylated (N-linked (GlcNAc...) asparagine). C726 and C774 are oxidised to a cystine. Residues E727, D728, and R771 each coordinate UDP-N-acetyl-alpha-D-glucosamine. D728 is an active-site residue.

Belongs to the glycosyltransferase 47 family. Interacts with rib-1. The cofactor is Mn(2+).

Its subcellular location is the endoplasmic reticulum membrane. The protein resides in the golgi apparatus membrane. It carries out the reaction 3-O-(beta-D-GlcA-(1-&gt;3)-beta-D-Gal-(1-&gt;3)-beta-D-Gal-(1-&gt;4)-beta-D-Xyl)-L-seryl-[protein] + UDP-N-acetyl-alpha-D-glucosamine = 3-O-(alpha-D-GlcNAc-(1-&gt;4)-beta-D-GlcA-(1-&gt;3)-beta-D-Gal-(1-&gt;3)-beta-D-Gal-(1-&gt;4)-beta-D-Xyl)-L-seryl-[protein] + UDP + H(+). The catalysed reaction is 3-O-{[(1-&gt;4)-beta-D-GlcA-(1-&gt;4)-alpha-D-GlcNAc](n)-(1-&gt;4)-beta-D-GlcA-(1-&gt;3)-beta-D-Gal-(1-&gt;3)-beta-D-Gal-(1-&gt;4)-beta-D-Xyl}-L-seryl-[protein] + UDP-N-acetyl-alpha-D-glucosamine = 3-O-{alpha-D-GlcNAc-[(1-&gt;4)-beta-D-GlcA-(1-&gt;4)-alpha-D-GlcNAc](n)-(1-&gt;4)-beta-D-GlcA-(1-&gt;3)-beta-D-Gal-(1-&gt;3)-beta-D-Gal-(1-&gt;4)-beta-D-Xyl}-L-seryl-[protein] + UDP + H(+). The enzyme catalyses 3-O-{alpha-D-GlcNAc-[(1-&gt;4)-beta-D-GlcA-(1-&gt;4)-alpha-D-GlcNAc](n)-(1-&gt;4)-beta-D-GlcA-(1-&gt;3)-beta-D-Gal-(1-&gt;3)-beta-D-Gal-(1-&gt;4)-beta-D-Xyl}-L-seryl-[protein] + UDP-alpha-D-glucuronate = 3-O-{[(1-&gt;4)-beta-D-GlcA-(1-&gt;4)-alpha-D-GlcNAc](n+1)-(1-&gt;4)-beta-D-GlcA-(1-&gt;3)-beta-D-Gal-(1-&gt;3)-beta-D-Gal-(1-&gt;4)-beta-D-Xyl}-L-seryl-[protein] + UDP + H(+). It participates in glycan metabolism; heparan sulfate biosynthesis. Its activity is regulated as follows. Binding to rib-1 is required for GlcAT-II activity and for increasing GlcNAc-II activity in vitro. In terms of biological role, glycosyltransferase required for the biosynthesis of heparan sulfate. Initiates heparan sulfate synthesis by transferring GlcNAc to the (GlcA-Gal-Gal-Xyl-)Ser core linker (GlcNAcT-I activity). In association with rib-1, is also responsible for the alternating addition of beta-1-4-linked glucuronic acid (GlcA) and alpha-1-4-linked N-acetylglucosamine (GlcNAc) units to nascent heparan sulfate chains (GlcNAcT-II and GlcAT-II activities). Required for normal ventral epidermal enclosure during the early stages of embryonic development. In addition, involved in the elongation of the pharyngeal isthmus during the later stages of embryonic development. Involved in the directed migration of hermaphrodite-specific neurons. This chain is Exostosin-like-3 homolog (rib-2), found in Caenorhabditis elegans.